The sequence spans 81 residues: Neuronatin (81 aa).

It belongs to the neuronatin family.

Its function is as follows. May participate in the maintenance of segment identity in the hindbrain and pituitary development, and maturation or maintenance of the overall structure of the nervous system. May function as a regulatory subunit of ion channels. This chain is Neuronatin (NNAT), found in Homo sapiens (Human).